The following is a 126-amino-acid chain: Large ribosomal subunit protein bL12 (126 aa).

The protein belongs to the bacterial ribosomal protein bL12 family. As to quaternary structure, homodimer. Part of the ribosomal stalk of the 50S ribosomal subunit. Forms a multimeric L10(L12)X complex, where L10 forms an elongated spine to which 2 to 4 L12 dimers bind in a sequential fashion. Binds GTP-bound translation factors.

Its function is as follows. Forms part of the ribosomal stalk which helps the ribosome interact with GTP-bound translation factors. Is thus essential for accurate translation. The chain is Large ribosomal subunit protein bL12 from Bordetella avium (strain 197N).